Here is a 606-residue protein sequence, read N- to C-terminus: NADH-ubiquinone oxidoreductase chain 5 (606 aa).

The next 16 helical transmembrane spans lie at 1–21, 43–63, 87–107, 112–132, 137–157, 171–191, 213–233, 241–261, 273–293, 301–321, 324–344, 366–386, 407–429, 457–477, 482–502, and 582–602; these read MNPF…PIMM, AFTL…EMII, VMFI…SMWY, PFIN…MILV, LFQL…LIGW, AILY…WFLT, LIGL…HPWL, TPVS…FLLI, VQTM…LCAI, IVAF…GINQ, LAFL…MCSG, MPFT…MPYL, WALL…IIFF, LLIG…PMTV, MPLY…MLAL, and GLIK…MTLF.

Belongs to the complex I subunit 5 family. Core subunit of respiratory chain NADH dehydrogenase (Complex I) which is composed of 45 different subunits.

Its subcellular location is the mitochondrion inner membrane. It catalyses the reaction a ubiquinone + NADH + 5 H(+)(in) = a ubiquinol + NAD(+) + 4 H(+)(out). Core subunit of the mitochondrial membrane respiratory chain NADH dehydrogenase (Complex I) which catalyzes electron transfer from NADH through the respiratory chain, using ubiquinone as an electron acceptor. Essential for the catalytic activity and assembly of complex I. This Sus scrofa (Pig) protein is NADH-ubiquinone oxidoreductase chain 5 (MT-ND5).